Reading from the N-terminus, the 1268-residue chain is Neurocan core protein (1268 aa).

Positions 1-22 (MGAGSVWASGLLLLWLLLLVAG) are cleaved as a signal peptide. Positions 37–157 (RMLKSGSGPV…EQDLVTLEVT (121 aa)) constitute an Ig-like V-type domain. 5 disulfides stabilise this stretch: Cys58–Cys139, Cys181–Cys252, Cys205–Cys226, Cys279–Cys354, and Cys303–Cys324. N-linked (GlcNAc...) asparagine glycosylation occurs at Asn121. 2 consecutive Link domains span residues 159–254 (VVFH…YCFA) and 258–356 (GGEV…YCFR). An N-linked (GlcNAc...) asparagine glycan is attached at Asn339. Disordered stretches follow at residues 363–391 (QHGD…ELKP), 406–442 (PLMS…SWPS), 472–540 (PLGT…DQSH), and 574–630 (ISPS…LQAS). O-linked (Xyl...) (chondroitin sulfate) serine glycosylation is found at Ser380 and Ser410. Over residues 419–430 (TWTQAPEETLGS) the composition is skewed to polar residues. Residues 575 to 585 (SPSVPSTESTP) are compositionally biased toward low complexity. The span at 608–617 (PSEPPAPSPG) shows a compositional bias: pro residues. A compositionally biased stretch (low complexity) spans 618–630 (PSEALSAVSLQAS). Asn742 is a glycosylation site (N-linked (GlcNAc...) asparagine). The region spanning 960–996 (PTDPCENNPCLHGGTCHTNGTVYGCSCDQGYAGENCE) is the EGF-like 1 domain. Intrachain disulfides connect Cys964–Cys975, Cys969–Cys984, Cys986–Cys995, Cys1002–Cys1013, Cys1007–Cys1022, Cys1024–Cys1033, Cys1040–Cys1051, Cys1068–Cys1160, Cys1136–Cys1152, Cys1167–Cys1210, and Cys1196–Cys1223. Asn978 is a glycosylation site (N-linked (GlcNAc...) asparagine). An EGF-like 2; calcium-binding domain is found at 998–1034 (DIDDCLCSPCENGGTCIDEVNGFICLCLPSYGGSLCE). Residues 1036 to 1165 (DTEGCDRGWH…LPYVCKKGTV (130 aa)) form the C-type lectin domain. A Sushi domain is found at 1165-1225 (VLCGPPPAVE…WDRPQIMCIK (61 aa)). Asn1175 carries N-linked (GlcNAc...) asparagine glycosylation. The segment covering 1228 to 1255 (RSHRMRRHHHHPHRHHKPRKEHRKHKRH) has biased composition (basic residues). Residues 1228 to 1268 (RSHRMRRHHHHPHRHHKPRKEHRKHKRHPAEDWEKDEGDFC) form a disordered region.

This sequence belongs to the aggrecan/versican proteoglycan family. O-glycosylated; contains chondroitin sulfate. As to expression, brain.

It localises to the secreted. Its function is as follows. May modulate neuronal adhesion and neurite growth during development by binding to neural cell adhesion molecules (NG-CAM and N-CAM). Chondroitin sulfate proteoglycan; binds to hyaluronic acid. This is Neurocan core protein (Ncan) from Mus musculus (Mouse).